Consider the following 211-residue polypeptide: uncharacterized protein (211 aa).

Disordered regions lie at residues 45–74 (RSCGRSSTGGCSPCSGPGPSSPRTSRGALS) and 147–211 (AETR…WEEP). A compositionally biased stretch (low complexity) spans 48–71 (GRSSTGGCSPCSGPGPSSPRTSRG). The span at 195 to 205 (DSGSIKMSENE) shows a compositional bias: polar residues.

This is an uncharacterized protein from Homo sapiens (Human).